We begin with the raw amino-acid sequence, 210 residues long: Probable nicotinate-nucleotide adenylyltransferase (210 aa).

It belongs to the NadD family.

The catalysed reaction is nicotinate beta-D-ribonucleotide + ATP + H(+) = deamido-NAD(+) + diphosphate. It participates in cofactor biosynthesis; NAD(+) biosynthesis; deamido-NAD(+) from nicotinate D-ribonucleotide: step 1/1. Its function is as follows. Catalyzes the reversible adenylation of nicotinate mononucleotide (NaMN) to nicotinic acid adenine dinucleotide (NaAD). This chain is Probable nicotinate-nucleotide adenylyltransferase, found in Streptococcus mutans serotype c (strain ATCC 700610 / UA159).